The sequence spans 175 residues: Protein MODIFYING WALL LIGNIN-1 (175 aa).

The signal sequence occupies residues M1–A24. The Cytoplasmic portion of the chain corresponds to L25 to F52. A helical membrane pass occupies residues G53–I73. Residues C74–T86 lie on the Extracellular side of the membrane. Residues I87–I107 form a helical membrane-spanning segment. Residues S108 to V135 lie on the Cytoplasmic side of the membrane. A helical membrane pass occupies residues F136–F156. The Extracellular segment spans residues K157–V175.

Belongs to the DESIGUAL family. As to quaternary structure, interacts with CRK19.

The protein localises to the cell membrane. Together with MWL2, contributes to secondary cell wall biology, specifically lignin biosynthesis. The sequence is that of Protein MODIFYING WALL LIGNIN-1 from Arabidopsis thaliana (Mouse-ear cress).